Here is a 101-residue protein sequence, read N- to C-terminus: Small ribosomal subunit protein uS14 (101 aa).

The protein belongs to the universal ribosomal protein uS14 family. In terms of assembly, part of the 30S ribosomal subunit. Contacts proteins S3 and S10.

In terms of biological role, binds 16S rRNA, required for the assembly of 30S particles and may also be responsible for determining the conformation of the 16S rRNA at the A site. This Polaromonas naphthalenivorans (strain CJ2) protein is Small ribosomal subunit protein uS14.